The following is a 196-amino-acid chain: MINKIYGKIIEKRESSIVIVALPFEFEVLVSSFCNAELRLLEDVEILTYLHLREDEIKLFGFLNVSEREVFEELISVDGIGPRAALRMLSGMKYDEFRDAIEREDVKRISTVKGIGNKVAGKIFLKLRGKLVKADELTSSVFKFKDLEQSIVNMGFDRKLVVAAIKEIMLIDEFLMLREVEQEQFLFRETLKRLSG.

The interval 1–63 (MINKIYGKII…EDEIKLFGFL (63 aa)) is domain I. Residues 64-138 (NVSEREVFEE…GKLVKADELT (75 aa)) form a domain II region. Position 138 (threonine 138) is a region of interest, flexible linker. Residues 139–196 (SSVFKFKDLEQSIVNMGFDRKLVVAAIKEIMLIDEFLMLREVEQEQFLFRETLKRLSG) form a domain III region.

It belongs to the RuvA family. Homotetramer. Forms an RuvA(8)-RuvB(12)-Holliday junction (HJ) complex. HJ DNA is sandwiched between 2 RuvA tetramers; dsDNA enters through RuvA and exits via RuvB. An RuvB hexamer assembles on each DNA strand where it exits the tetramer. Each RuvB hexamer is contacted by two RuvA subunits (via domain III) on 2 adjacent RuvB subunits; this complex drives branch migration. In the full resolvosome a probable DNA-RuvA(4)-RuvB(12)-RuvC(2) complex forms which resolves the HJ.

It localises to the cytoplasm. In terms of biological role, the RuvA-RuvB-RuvC complex processes Holliday junction (HJ) DNA during genetic recombination and DNA repair, while the RuvA-RuvB complex plays an important role in the rescue of blocked DNA replication forks via replication fork reversal (RFR). RuvA specifically binds to HJ cruciform DNA, conferring on it an open structure. The RuvB hexamer acts as an ATP-dependent pump, pulling dsDNA into and through the RuvAB complex. HJ branch migration allows RuvC to scan DNA until it finds its consensus sequence, where it cleaves and resolves the cruciform DNA. The chain is Holliday junction branch migration complex subunit RuvA from Borrelia hermsii (strain HS1 / DAH).